The sequence spans 555 residues: Luciferin 2-monooxygenase (555 aa).

Residues 1-11 (MKIIILSVILA) form the signal peptide. VWFD domains lie at 80 to 266 (IECR…EYCK) and 319 to 494 (GTCV…RLCN). Disulfide bonds link C82/C222, C321/C454, C343/C493, and C352/C451. Residues N186 and N408 are each glycosylated (N-linked (GlcNAc...) asparagine).

In terms of processing, the cysteine residues presumably exist in intramolecular disulfide bridges. The N-terminus is blocked.

It catalyses the reaction Cypridina luciferin + O2 = oxidized Cypridina luciferin + hnu + CO2. The chain is Luciferin 2-monooxygenase from Vargula hilgendorfii (Sea firefly).